The sequence spans 354 residues: Homer protein homolog 1 (354 aa).

In terms of domain architecture, WH1 spans 1–110; the sequence is MGEQPIFSTR…EKFQEFKEAA (110 aa). At glycine 2 the chain carries N-acetylglycine. The interval 114–173 is disordered; the sequence is KEKSQEKMELTSTPSQESAGGDLQSPLTPESINGTDDERTPDVTQNSEPRAEPTQNALPF. 2 stretches are compositionally biased toward polar residues: residues 138–147 and 155–173; these read SPLTPESING and DVTQ…ALPF. Positions 181–352 form a coiled coil; the sequence is KHWEAELATL…LRDNLAKLLE (172 aa). Residues 290-354 form a required for tetramerization region; it reads KLQEVEIRNK…DNLAKLLECS (65 aa). A Phosphoserine modification is found at serine 306.

The protein belongs to the Homer family. In terms of assembly, tetramer; this tetrameric structure is critical for forming the high-order complex with SHANK1, which in turn is necessary for the structural and functional integrity of dendritic spines. Interacts with GRM1, GRM5, ITPR1, DNM3, RYR1, RYR2 and SHANK3. Interacts with IFT57 and OPHN1. Isoform 1 encodes a coiled-coil structure that mediates homo- and heteromultimerization. Interacts with SHANK1; forms high-order polymerized complex with a mesh-like network structure, at least composed of SHANK1, HOMER1 and DLGAP1; the complex formation is SHANK1 multimerization dependent. Interacts with NFATC4. Interacts with DAGLA (via PPXXF motif); this interaction is required for the cell membrane localization of DAGLA. Interacts with SRGAP2.

The protein resides in the cytoplasm. It localises to the postsynaptic density. It is found in the synapse. The protein localises to the cell projection. Its subcellular location is the dendritic spine. Postsynaptic density scaffolding protein. Binds and cross-links cytoplasmic regions of GRM1, GRM5, ITPR1, DNM3, RYR1, RYR2, SHANK1 and SHANK3. By physically linking GRM1 and GRM5 with ER-associated ITPR1 receptors, it aids the coupling of surface receptors to intracellular calcium release. May also couple GRM1 to PI3 kinase through its interaction with AGAP2. Isoform 1 regulates the trafficking and surface expression of GRM5. Isoform 3 acts as a natural dominant negative, in dynamic competition with constitutively expressed isoform 1 to regulate synaptic metabotropic glutamate function. Isoform 3, may be involved in the structural changes that occur at synapses during long-lasting neuronal plasticity and development. Forms a high-order complex with SHANK1, which in turn is necessary for the structural and functional integrity of dendritic spines. Negatively regulates T cell activation by inhibiting the calcineurin-NFAT pathway. Acts by competing with calcineurin/PPP3CA for NFAT protein binding, hence preventing NFAT activation by PPP3CA. This Homo sapiens (Human) protein is Homer protein homolog 1.